The chain runs to 440 residues: 23S rRNA (uracil(1939)-C(5))-methyltransferase RlmD (440 aa).

The TRAM domain maps to 11-69 (STLDTKHQPVTIERLDHQGSGLAFLHKKPLFVDGALPGEEVLIQLTENKSKYARGQLIK). Residues Cys82, Cys88, Cys91, and Cys169 each coordinate [4Fe-4S] cluster. Residues Gln272, Phe301, Asn306, Glu322, Asn349, and Asp370 each coordinate S-adenosyl-L-methionine. Cys396 serves as the catalytic Nucleophile.

The protein belongs to the class I-like SAM-binding methyltransferase superfamily. RNA M5U methyltransferase family. RlmD subfamily.

It carries out the reaction uridine(1939) in 23S rRNA + S-adenosyl-L-methionine = 5-methyluridine(1939) in 23S rRNA + S-adenosyl-L-homocysteine + H(+). Its function is as follows. Catalyzes the formation of 5-methyl-uridine at position 1939 (m5U1939) in 23S rRNA. The sequence is that of 23S rRNA (uracil(1939)-C(5))-methyltransferase RlmD from Vibrio cholerae serotype O1 (strain ATCC 39541 / Classical Ogawa 395 / O395).